Consider the following 191-residue polypeptide: Ribosomal RNA small subunit methyltransferase G (191 aa).

S-adenosyl-L-methionine contacts are provided by residues glycine 62, leucine 67, 111-112, and arginine 124; that span reads IE.

This sequence belongs to the methyltransferase superfamily. RNA methyltransferase RsmG family.

The protein localises to the cytoplasm. It catalyses the reaction guanosine(527) in 16S rRNA + S-adenosyl-L-methionine = N(7)-methylguanosine(527) in 16S rRNA + S-adenosyl-L-homocysteine. Functionally, specifically methylates the N7 position of guanine in position 527 of 16S rRNA. The sequence is that of Ribosomal RNA small subunit methyltransferase G from Rickettsia rickettsii (strain Sheila Smith).